The primary structure comprises 160 residues: Transcription antitermination protein NusB (160 aa).

It belongs to the NusB family.

In terms of biological role, involved in transcription antitermination. Required for transcription of ribosomal RNA (rRNA) genes. Binds specifically to the boxA antiterminator sequence of the ribosomal RNA (rrn) operons. This Mycolicibacterium smegmatis (strain ATCC 700084 / mc(2)155) (Mycobacterium smegmatis) protein is Transcription antitermination protein NusB.